The following is a 514-amino-acid chain: Protein translocase subunit SecD (514 aa).

The next 5 membrane-spanning stretches (helical) occupy residues 7–27 (WKIFLSIICTIFAVICALPNF), 357–377 (IIGFAAVCIFMVWSYGLLGLF), 389–409 (VLALLSLFQATLTLPGIAGII), 448–470 (FATILDSNLTTLIVAFLLYIFGV), and 482–502 (IGIISSMFSAIIITKLLIDIW).

It belongs to the SecD/SecF family. SecD subfamily. As to quaternary structure, forms a complex with SecF. Part of the essential Sec protein translocation apparatus which comprises SecA, SecYEG and auxiliary proteins SecDF-YajC and YidC.

It is found in the cell inner membrane. Functionally, part of the Sec protein translocase complex. Interacts with the SecYEG preprotein conducting channel. SecDF uses the proton motive force (PMF) to complete protein translocation after the ATP-dependent function of SecA. In Rickettsia bellii (strain RML369-C), this protein is Protein translocase subunit SecD.